The primary structure comprises 406 residues: Peptidase T (406 aa).

His-81 serves as a coordination point for Zn(2+). Residue Asp-83 is part of the active site. Residue Asp-142 coordinates Zn(2+). Residue Glu-176 is the Proton acceptor of the active site. Glu-177, Asp-199, and His-381 together coordinate Zn(2+).

The protein belongs to the peptidase M20B family. Requires Zn(2+) as cofactor.

It localises to the cytoplasm. The catalysed reaction is Release of the N-terminal residue from a tripeptide.. Its function is as follows. Cleaves the N-terminal amino acid of tripeptides. The polypeptide is Peptidase T (Streptococcus suis (strain 98HAH33)).